The chain runs to 251 residues: Transcription factor bHLH144 (251 aa).

Disordered regions lie at residues 1–20, 130–161, and 173–202; these read MQNN…NMHN, YEEN…YGNT, and NNNN…RKKM. The span at 9-18 shows a compositional bias: basic and acidic residues; that stretch reads FSDEVGDRNM. Residues 130 to 147 show a composition bias toward acidic residues; the sequence is YEENDDNEGEEDGGDSEE. Over residues 148 to 161 the composition is skewed to polar residues; sequence VSTARTSSRDYGNT. Positions 173–192 are enriched in low complexity; that stretch reads NNNNNNNSRKQSLSGSASSS. The bHLH domain occupies 186 to 235; it reads SGSASSSNNDGKGRKKMKKMMGVLRRIVPGGEQMNTACVLDEAVQYLKSL.

Homodimer. Interacts with LHW.

The protein localises to the nucleus. In Arabidopsis thaliana (Mouse-ear cress), this protein is Transcription factor bHLH144 (BHLH144).